We begin with the raw amino-acid sequence, 957 residues long: Glycine dehydrogenase (decarboxylating) (957 aa).

An N6-(pyridoxal phosphate)lysine modification is found at lysine 708.

It belongs to the GcvP family. The glycine cleavage system is composed of four proteins: P, T, L and H. Pyridoxal 5'-phosphate serves as cofactor.

The catalysed reaction is N(6)-[(R)-lipoyl]-L-lysyl-[glycine-cleavage complex H protein] + glycine + H(+) = N(6)-[(R)-S(8)-aminomethyldihydrolipoyl]-L-lysyl-[glycine-cleavage complex H protein] + CO2. In terms of biological role, the glycine cleavage system catalyzes the degradation of glycine. The P protein binds the alpha-amino group of glycine through its pyridoxal phosphate cofactor; CO(2) is released and the remaining methylamine moiety is then transferred to the lipoamide cofactor of the H protein. The sequence is that of Glycine dehydrogenase (decarboxylating) from Escherichia coli O8 (strain IAI1).